The sequence spans 332 residues: Protein pelota homolog (332 aa).

This sequence belongs to the eukaryotic release factor 1 family. Pelota subfamily. Monomer. A divalent metal cation is required as a cofactor.

The protein localises to the cytoplasm. Functionally, may function in recognizing stalled ribosomes, interact with stem-loop structures in stalled mRNA molecules, and effect endonucleolytic cleavage of the mRNA. May play a role in the release non-functional ribosomes and degradation of damaged mRNAs. Has endoribonuclease activity. The protein is Protein pelota homolog of Pyrobaculum aerophilum (strain ATCC 51768 / DSM 7523 / JCM 9630 / CIP 104966 / NBRC 100827 / IM2).